We begin with the raw amino-acid sequence, 475 residues long: ESX-3 secretion system protein EccD3 (475 aa).

A run of 11 helical transmembrane segments spans residues 132-152, 161-181, 186-206, 212-232, 241-261, 264-284, 333-353, 354-374, 384-404, 409-429, and 453-473; these read IARG…GLSV, LLGQ…ALAV, AVLA…AFAL, FGAP…LISM, IAVF…AGAA, WVIS…IVTV, GVIA…VSSA, NASP…ALRA, AWLL…FVIG, AALW…VAAL, and GLDA…SLVL.

Belongs to the EccD/Snm4 family. As to quaternary structure, part of the ESX-3 / type VII secretion system (T7SS), which is composed of cytosolic and membrane components. The ESX-3 membrane complex is composed of EccB3, EccC3, EccD3 and EccE3.

Its subcellular location is the cell inner membrane. Part of the ESX-3 specialized secretion system, which is required for siderophore-mediated iron acquisition and for the secretion of EsxH and EsxG. This Mycolicibacterium smegmatis (strain ATCC 700084 / mc(2)155) (Mycobacterium smegmatis) protein is ESX-3 secretion system protein EccD3.